Consider the following 273-residue polypeptide: Outer surface protein A (273 aa).

The N-terminal stretch at Met-1–Ala-16 is a signal peptide. Residue Cys-17 is the site of N-palmitoyl cysteine attachment. The S-diacylglycerol cysteine moiety is linked to residue Cys-17.

The protein belongs to the OspA lipoprotein family.

It localises to the cell outer membrane. Its subcellular location is the cell surface. In terms of biological role, induces host (human and mouse) cytokine release by monocyte cell lines via TLR2 and CD14; nonlipidated protein does not stimulate host cells. The chain is Outer surface protein A from Borreliella burgdorferi (strain ATCC 35210 / DSM 4680 / CIP 102532 / B31) (Borrelia burgdorferi).